Reading from the N-terminus, the 184-residue chain is Latex serine proteinase inhibitor (184 aa).

A disulfide bridge links cysteine 45 with cysteine 89. 2 N-linked (GlcNAc...) asparagine glycosylation sites follow: asparagine 84 and asparagine 90. An intrachain disulfide couples cysteine 142 to cysteine 153.

The protein belongs to the protease inhibitor I3 (leguminous Kunitz-type inhibitor) family.

It is found in the secreted. The protein localises to the extracellular space. The chain is Latex serine proteinase inhibitor from Carica papaya (Papaya).